Here is an 891-residue protein sequence, read N- to C-terminus: Protein kinase kin1 (891 aa).

The tract at residues 65 to 116 (GYISPSSQSPHHGPVRSPSSRKPLPASPSRTRDHSLRVPVSGHSYSADEKPR) is disordered. The Protein kinase domain maps to 125–395 (YVLGKTIGAG…LEEVLNHPWM (271 aa)). Residues 131–139 (IGAGSMGKV) and Lys154 each bind ATP. The Proton acceptor role is filled by Asp266. A Phosphothreonine modification is found at Thr528. Disordered regions lie at residues 528–699 (TPVS…RNNR), 728–747 (TMGN…TDKL), and 805–841 (TPTK…LDDN). 2 stretches are compositionally biased toward low complexity: residues 529–538 (PVSSVPSSPV) and 583–603 (HSPS…IFRR). A phosphoserine mark is found at Ser535 and Ser536. 5 stretches are compositionally biased toward polar residues: residues 612–629 (KSST…TSQS), 649–659 (LVTQSAIGRST), 669–699 (ISSQ…RNNR), 728–742 (TMGN…SPSK), and 820–829 (YGSNSTTDSY). Residues 842-891 (GESPASNLAFEIYIVKVPILSLRGVSFHRISGNSWQYKTLASRILNELKL) form the KA1 domain.

The protein belongs to the protein kinase superfamily. Ser/Thr protein kinase family.

Its subcellular location is the cytoplasm. It catalyses the reaction L-seryl-[protein] + ATP = O-phospho-L-seryl-[protein] + ADP + H(+). It carries out the reaction L-threonyl-[protein] + ATP = O-phospho-L-threonyl-[protein] + ADP + H(+). In terms of biological role, has a role in establishing the characteristic rod cell shape. Important for cell polarity and is involved in directing growth to the cell ends. This is Protein kinase kin1 (kin1) from Schizosaccharomyces pombe (strain 972 / ATCC 24843) (Fission yeast).